The chain runs to 207 residues: Imidazole glycerol phosphate synthase subunit HisH (207 aa).

Positions 1–206 (MMIVIGYDAG…KEYVYENTAR (206 aa)) constitute a Glutamine amidotransferase type-1 domain. The active-site Nucleophile is cysteine 79. Active-site residues include histidine 181 and glutamate 183.

As to quaternary structure, heterodimer of HisH and HisF.

The protein resides in the cytoplasm. It carries out the reaction 5-[(5-phospho-1-deoxy-D-ribulos-1-ylimino)methylamino]-1-(5-phospho-beta-D-ribosyl)imidazole-4-carboxamide + L-glutamine = D-erythro-1-(imidazol-4-yl)glycerol 3-phosphate + 5-amino-1-(5-phospho-beta-D-ribosyl)imidazole-4-carboxamide + L-glutamate + H(+). It catalyses the reaction L-glutamine + H2O = L-glutamate + NH4(+). The protein operates within amino-acid biosynthesis; L-histidine biosynthesis; L-histidine from 5-phospho-alpha-D-ribose 1-diphosphate: step 5/9. Functionally, IGPS catalyzes the conversion of PRFAR and glutamine to IGP, AICAR and glutamate. The HisH subunit catalyzes the hydrolysis of glutamine to glutamate and ammonia as part of the synthesis of IGP and AICAR. The resulting ammonia molecule is channeled to the active site of HisF. The protein is Imidazole glycerol phosphate synthase subunit HisH of Streptococcus gordonii (strain Challis / ATCC 35105 / BCRC 15272 / CH1 / DL1 / V288).